A 235-amino-acid polypeptide reads, in one-letter code: Protein MAINTENANCE OF PSII UNDER HIGH LIGHT 1 (235 aa).

The chain crosses the membrane as a helical span at residues threonine 127–leucine 147. The segment at glutamine 181–serine 235 is disordered. Polar residues-rich tracts occupy residues leucine 200–proline 214 and glutamate 224–serine 235.

In terms of assembly, interacts with psbA, psbB, psbC and psbD.

Its subcellular location is the plastid. The protein localises to the chloroplast thylakoid membrane. In terms of biological role, interacts with photosystem II (PSII) core complexes and participates in the maintenance of normal PSII activity under photoinhibitory stress. May protect against photodamage or stabilize PSII under high-light stress. Participates in the maintainance of proper PSII function under high-light stress by protecting PSII from photooxidative damage. In Arabidopsis thaliana (Mouse-ear cress), this protein is Protein MAINTENANCE OF PSII UNDER HIGH LIGHT 1.